Here is a 118-residue protein sequence, read N- to C-terminus: UPF0449 protein C19orf25 (118 aa).

Residue tyrosine 63 is modified to Phosphotyrosine. A coiled-coil region spans residues 81 to 109; it reads NVLRQRCELLQRAGEDLEREVAQMKQAAL.

It belongs to the UPF0449 family.

The polypeptide is UPF0449 protein C19orf25 (C19orf25) (Homo sapiens (Human)).